The primary structure comprises 459 residues: Trigger factor (459 aa).

Residues 166–245 enclose the PPIase FKBP-type domain; it reads GDFANIDLTA…VNSVKAEELP (80 aa).

Belongs to the FKBP-type PPIase family. Tig subfamily.

The protein localises to the cytoplasm. It carries out the reaction [protein]-peptidylproline (omega=180) = [protein]-peptidylproline (omega=0). Functionally, involved in protein export. Acts as a chaperone by maintaining the newly synthesized protein in an open conformation. Functions as a peptidyl-prolyl cis-trans isomerase. This Bifidobacterium longum (strain NCC 2705) protein is Trigger factor.